The chain runs to 261 residues: Cytochrome c oxidase subunit 3 (261 aa).

Over 1 to 15 (MAHQAHAYHMVDPSP) the chain is Mitochondrial matrix. A helical transmembrane segment spans residues 16 to 34 (WPITGATAALLVTSGLAAW). Topologically, residues 35–40 (FHFNSM) are mitochondrial intermembrane. The chain crosses the membrane as a helical span at residues 41-66 (ILILMGLTLLLLTMYQWWRDIIREST). At 67 to 72 (FQGHHT) the chain is on the mitochondrial matrix side. Residues 73–105 (LPVQKSLRYGMILFITSEVFFFLGFFWAFYHSS) traverse the membrane as a helical segment. The Mitochondrial intermembrane segment spans residues 106-128 (LAPTPELGGLWPPTGITPLDPFE). The helical transmembrane segment at 129–152 (VPLLNTAVLLASGITVTWAHHSLM) threads the bilayer. Residues 153–155 (EGQ) are Mitochondrial matrix-facing. Residues 156-183 (RKEAIQSLFITVLLGLYFTALQATEYYE) traverse the membrane as a helical segment. The Mitochondrial intermembrane segment spans residues 184–190 (SPFTIAD). The helical transmembrane segment at 191–223 (GAYGSTFFVATGFHGLHVIIGSTFLIVCLVRQT) threads the bilayer. Over 224-232 (QYHFTSNHH) the chain is Mitochondrial matrix. A helical membrane pass occupies residues 233 to 256 (FGFEAAAWYWHFVDVVWLFLYVSI). Residues 257 to 261 (YWWGS) lie on the Mitochondrial intermembrane side of the membrane.

It belongs to the cytochrome c oxidase subunit 3 family. In terms of assembly, component of the cytochrome c oxidase (complex IV, CIV), a multisubunit enzyme composed of 14 subunits. The complex is composed of a catalytic core of 3 subunits MT-CO1, MT-CO2 and MT-CO3, encoded in the mitochondrial DNA, and 11 supernumerary subunits COX4I, COX5A, COX5B, COX6A, COX6B, COX6C, COX7A, COX7B, COX7C, COX8 and NDUFA4, which are encoded in the nuclear genome. The complex exists as a monomer or a dimer and forms supercomplexes (SCs) in the inner mitochondrial membrane with NADH-ubiquinone oxidoreductase (complex I, CI) and ubiquinol-cytochrome c oxidoreductase (cytochrome b-c1 complex, complex III, CIII), resulting in different assemblies (supercomplex SCI(1)III(2)IV(1) and megacomplex MCI(2)III(2)IV(2)).

The protein localises to the mitochondrion inner membrane. The catalysed reaction is 4 Fe(II)-[cytochrome c] + O2 + 8 H(+)(in) = 4 Fe(III)-[cytochrome c] + 2 H2O + 4 H(+)(out). Functionally, component of the cytochrome c oxidase, the last enzyme in the mitochondrial electron transport chain which drives oxidative phosphorylation. The respiratory chain contains 3 multisubunit complexes succinate dehydrogenase (complex II, CII), ubiquinol-cytochrome c oxidoreductase (cytochrome b-c1 complex, complex III, CIII) and cytochrome c oxidase (complex IV, CIV), that cooperate to transfer electrons derived from NADH and succinate to molecular oxygen, creating an electrochemical gradient over the inner membrane that drives transmembrane transport and the ATP synthase. Cytochrome c oxidase is the component of the respiratory chain that catalyzes the reduction of oxygen to water. Electrons originating from reduced cytochrome c in the intermembrane space (IMS) are transferred via the dinuclear copper A center (CU(A)) of subunit 2 and heme A of subunit 1 to the active site in subunit 1, a binuclear center (BNC) formed by heme A3 and copper B (CU(B)). The BNC reduces molecular oxygen to 2 water molecules using 4 electrons from cytochrome c in the IMS and 4 protons from the mitochondrial matrix. The polypeptide is Cytochrome c oxidase subunit 3 (MT-CO3) (Latimeria chalumnae (Coelacanth)).